The following is a 248-amino-acid chain: Adenosylcobinamide-GDP ribazoletransferase (248 aa).

Helical transmembrane passes span 36-56 (FFLPVVASIIGGMEFLIYLGL), 59-79 (FLPSNVIIVLLLLFTAMITGG), 114-134 (GTIALIIDLLLKYQLLYSLVL), 137-157 (YSIAIFLAPIIGRISILFLCL), 170-190 (IFIGNMSKPIVFFISTIVLVL), and 199-219 (ATIIPFIGALLITYLLYLLCL).

The protein belongs to the CobS family. It depends on Mg(2+) as a cofactor.

It is found in the cell membrane. It catalyses the reaction alpha-ribazole + adenosylcob(III)inamide-GDP = adenosylcob(III)alamin + GMP + H(+). It carries out the reaction alpha-ribazole 5'-phosphate + adenosylcob(III)inamide-GDP = adenosylcob(III)alamin 5'-phosphate + GMP + H(+). It functions in the pathway cofactor biosynthesis; adenosylcobalamin biosynthesis; adenosylcobalamin from cob(II)yrinate a,c-diamide: step 7/7. Its function is as follows. Joins adenosylcobinamide-GDP and alpha-ribazole to generate adenosylcobalamin (Ado-cobalamin). Also synthesizes adenosylcobalamin 5'-phosphate from adenosylcobinamide-GDP and alpha-ribazole 5'-phosphate. This Clostridium botulinum (strain Loch Maree / Type A3) protein is Adenosylcobinamide-GDP ribazoletransferase.